We begin with the raw amino-acid sequence, 118 residues long: Small ribosomal subunit protein uS13 (118 aa).

The disordered stretch occupies residues 93–118; that stretch reads KGLPVRGQRTKTNARTRKGPRKPIRK.

The protein belongs to the universal ribosomal protein uS13 family. Part of the 30S ribosomal subunit. Forms a loose heterodimer with protein S19. Forms two bridges to the 50S subunit in the 70S ribosome.

Functionally, located at the top of the head of the 30S subunit, it contacts several helices of the 16S rRNA. In the 70S ribosome it contacts the 23S rRNA (bridge B1a) and protein L5 of the 50S subunit (bridge B1b), connecting the 2 subunits; these bridges are implicated in subunit movement. Contacts the tRNAs in the A and P-sites. In Ectopseudomonas mendocina (strain ymp) (Pseudomonas mendocina), this protein is Small ribosomal subunit protein uS13.